Consider the following 149-residue polypeptide: Nucleoside diphosphate kinase (149 aa).

6 residues coordinate ATP: Lys-9, Phe-57, Arg-85, Thr-91, Arg-102, and Asn-112. The active-site Pros-phosphohistidine intermediate is His-115.

The protein belongs to the NDK family. Homotetramer. Requires Mg(2+) as cofactor.

It localises to the cytoplasm. It carries out the reaction a 2'-deoxyribonucleoside 5'-diphosphate + ATP = a 2'-deoxyribonucleoside 5'-triphosphate + ADP. It catalyses the reaction a ribonucleoside 5'-diphosphate + ATP = a ribonucleoside 5'-triphosphate + ADP. Its function is as follows. Major role in the synthesis of nucleoside triphosphates other than ATP. The ATP gamma phosphate is transferred to the NDP beta phosphate via a ping-pong mechanism, using a phosphorylated active-site intermediate. This chain is Nucleoside diphosphate kinase, found in Trichodesmium erythraeum (strain IMS101).